The sequence spans 467 residues: UDP-N-acetylmuramate--L-alanine ligase (467 aa).

121–127 (GSHGKTT) provides a ligand contact to ATP.

The protein belongs to the MurCDEF family.

The protein resides in the cytoplasm. The enzyme catalyses UDP-N-acetyl-alpha-D-muramate + L-alanine + ATP = UDP-N-acetyl-alpha-D-muramoyl-L-alanine + ADP + phosphate + H(+). Its pathway is cell wall biogenesis; peptidoglycan biosynthesis. In terms of biological role, cell wall formation. The protein is UDP-N-acetylmuramate--L-alanine ligase of Parasynechococcus marenigrum (strain WH8102).